Here is a 1881-residue protein sequence, read N- to C-terminus: Endoribonuclease Dicer-S (1881 aa).

A Helicase ATP-binding domain is found at 41–217; it reads LLEAALDHNI…DLEEKIQNLE (177 aa). 54–61 provides a ligand contact to ATP; the sequence is LNSGSGKT. The DECH box signature appears at 165–168; it reads DECH. The 170-residue stretch at 425–594 folds into the Helicase C-terminal domain; the sequence is SFPSPFTNIL…SMDCGNTESE (170 aa). The Dicer dsRNA-binding fold domain occupies 622 to 714; that stretch reads AIGHINRYCA…MPVGKETVKY (93 aa). A PAZ domain is found at 887–1034; the sequence is KFVEDIEKSE…LVPELCAIHP (148 aa). 2 consecutive RNase III domains span residues 1249–1380 and 1625–1783; these read TSDI…ETSG and FENF…MDSG. Glutamate 1293, aspartate 1371, glutamate 1374, glutamate 1664, aspartate 1769, and glutamate 1772 together coordinate Mg(2+). One can recognise a DRBM domain in the interval 1808–1873; the sequence is VPRSPVRELL…ARRALRSLKA (66 aa).

This sequence belongs to the helicase family. Dicer subfamily. In terms of assembly, component of the RISC loading complex (RLC), or micro-RNA (miRNA) loading complex (miRLC), which is composed of dicer1, ago2 and tarbp2; dicer1 and tarbp2 are required to process precursor miRNAs (pre-miRNAs) to mature miRNAs and then load them onto ago2. Note that the trimeric RLC/miRLC is also referred to as RISC. Mg(2+) is required as a cofactor. The cofactor is Mn(2+).

It is found in the cytoplasm. It carries out the reaction Endonucleolytic cleavage to 5'-phosphomonoester.. Double-stranded RNA (dsRNA) endoribonuclease playing a central role in short dsRNA-mediated post-transcriptional gene silencing. Cleaves naturally occurring long dsRNAs and short hairpin pre-microRNAs (miRNA) into fragments of twenty-one to twenty-three nucleotides with 3' overhang of two nucleotides, producing respectively short interfering RNAs (siRNA) and mature microRNAs. SiRNAs and miRNAs serve as guide to direct the RNA-induced silencing complex (RISC) to complementary RNAs to degrade them or prevent their translation. Gene silencing mediated by siRNAs, also called RNA interference, controls the elimination of transcripts from mobile and repetitive DNA elements of the genome but also the degradation of exogenous RNA of viral origin for instance. The miRNA pathway on the other side is a mean to specifically regulate the expression of target genes. During embryonic development, at the left-right organizer, post-transcriptionally regulates the expression of dand5 in flow sensor cells. In post-flow stages, acts along with Bicc1 to repress dand5 mRNA translation and decay. Decreased Dand5 expression lifts repression of Nodal and defines leftness by induction of the lateral plate mesoderm Nodal signaling cascade. The protein is Endoribonuclease Dicer-S (dicer1.S) of Xenopus laevis (African clawed frog).